The chain runs to 427 residues: MLDTVAKADGIDALMLDIGAKAKAAARPLAIASADQKNAALMAMSEAILSGKSQIIAANAIDLKAAETAGLAASFIDRLTLNEERITAMAKGLREVAELKDPVSEVIAAWERPNGLKIERVRTPLGVIGVIYESRPNVTADAGALCLKSGNAVILRGGSDSVNSSRAIHACLVAGLVAAGLPDHAIQLVPVTDRAAVGAMLTGLNGTIDVIVPRGGKSLVARVQSDARVPVFAHLEGLCHVYVDGSADLDMAKSIVVNAKMRRTGICGSAETLLVDSAAIGSHLMPLLEALTEAGCEIRASATVLKVFPGLKAAVDEDWRTEYLDAIISVAVVDGIGGAIDHIARYSSNHTEAVIAEDPAVVERFFNEVDSAILLHNASTQFADGGEFGMGGEIGIATGKMHARGPVGVEQLTSFKYRVHGTGQIRP.

This sequence belongs to the gamma-glutamyl phosphate reductase family.

It is found in the cytoplasm. It carries out the reaction L-glutamate 5-semialdehyde + phosphate + NADP(+) = L-glutamyl 5-phosphate + NADPH + H(+). It participates in amino-acid biosynthesis; L-proline biosynthesis; L-glutamate 5-semialdehyde from L-glutamate: step 2/2. Catalyzes the NADPH-dependent reduction of L-glutamate 5-phosphate into L-glutamate 5-semialdehyde and phosphate. The product spontaneously undergoes cyclization to form 1-pyrroline-5-carboxylate. The chain is Gamma-glutamyl phosphate reductase from Allorhizobium ampelinum (strain ATCC BAA-846 / DSM 112012 / S4) (Agrobacterium vitis (strain S4)).